The chain runs to 706 residues: Catalase HPII (706 aa).

Active-site residues include His77 and Asn151. Heme is bound at residue Tyr365. The segment at 512 to 532 (EPPEEQVDESAPVSPALSQVT) is disordered.

This sequence belongs to the catalase family. HPII subfamily. It depends on heme as a cofactor.

It localises to the cytoplasm. It catalyses the reaction 2 H2O2 = O2 + 2 H2O. Functionally, decomposes hydrogen peroxide into water and oxygen; serves to protect cells from the toxic effects of hydrogen peroxide. The protein is Catalase HPII (katE) of Mycobacterium avium.